A 168-amino-acid polypeptide reads, in one-letter code: Probable chorismate pyruvate-lyase (168 aa).

The substrate site is built by Arg-75, Ile-114, and Glu-155.

It belongs to the UbiC family.

Its subcellular location is the cytoplasm. It carries out the reaction chorismate = 4-hydroxybenzoate + pyruvate. The protein operates within cofactor biosynthesis; ubiquinone biosynthesis. In terms of biological role, removes the pyruvyl group from chorismate, with concomitant aromatization of the ring, to provide 4-hydroxybenzoate (4HB) for the ubiquinone pathway. In Psychrobacter cryohalolentis (strain ATCC BAA-1226 / DSM 17306 / VKM B-2378 / K5), this protein is Probable chorismate pyruvate-lyase.